The primary structure comprises 137 residues: Nucleoside diphosphate kinase (137 aa).

Positions 10, 58, 86, 92, 103, and 113 each coordinate ATP. His-116 serves as the catalytic Pros-phosphohistidine intermediate.

This sequence belongs to the NDK family. Homotetramer. Mg(2+) serves as cofactor.

It localises to the cytoplasm. It catalyses the reaction a 2'-deoxyribonucleoside 5'-diphosphate + ATP = a 2'-deoxyribonucleoside 5'-triphosphate + ADP. The catalysed reaction is a ribonucleoside 5'-diphosphate + ATP = a ribonucleoside 5'-triphosphate + ADP. Its function is as follows. Major role in the synthesis of nucleoside triphosphates other than ATP. The ATP gamma phosphate is transferred to the NDP beta phosphate via a ping-pong mechanism, using a phosphorylated active-site intermediate. The protein is Nucleoside diphosphate kinase of Helicobacter pylori (strain ATCC 700392 / 26695) (Campylobacter pylori).